Reading from the N-terminus, the 200-residue chain is Max dimerization protein 3 (200 aa).

Disordered stretches follow at residues 26-56 (EHGY…DNVR) and 134-164 (LLPP…QEDL). The bHLH domain maps to 54–106 (NVRSVHNELEKHRRAQLRRCLEQLKQQVPLSMENSRHTTLSLLHRAKQHIKKL).

As to quaternary structure, efficient DNA binding requires dimerization with another bHLH protein. Binds DNA as a heterodimer with MAX.

Its subcellular location is the nucleus. Transcriptional repressor. Binds with MAX to form a sequence-specific DNA-binding protein complex which recognizes the core sequence 5'-CAC[GA]TG-3'. This Xenopus tropicalis (Western clawed frog) protein is Max dimerization protein 3 (mxd3).